A 562-amino-acid chain; its full sequence is Arf-GAP domain and FG repeat-containing protein 1 (562 aa).

Residues 11–135 (EKHLKMLRDM…WYVPPEQAKV (125 aa)) enclose the Arf-GAP domain. The C4-type zinc finger occupies 29–52 (CFDCDQRGPTYVNMTVGSFVCTSC). The interval 145 to 193 (GSSASSTSSTPEVKPLKSLLGDSAPTLHLNKGTPSQSPVVGRSQGQQQE) is disordered. Phosphoserine is present on Ser-167. A compositionally biased stretch (polar residues) spans 176–191 (GTPSQSPVVGRSQGQQ). At Thr-177 the chain carries Phosphothreonine. Residues Ser-181 and Ser-362 each carry the phosphoserine modification. Ser-367 carries O-linked (GlcNAc) serine glycosylation.

In terms of assembly, interacts with EPS15R and EPS15. Interacts with FCHO1. Post-translationally, O-glycosylated. Ubiquitously expressed.

It localises to the nucleus. Its subcellular location is the cytoplasmic vesicle. Its function is as follows. Required for vesicle docking or fusion during acrosome biogenesis. May play a role in RNA trafficking or localization. In case of infection by HIV-1, acts as a cofactor for viral Rev and promotes movement of Rev-responsive element-containing RNAs from the nuclear periphery to the cytoplasm. This step is essential for HIV-1 replication. This chain is Arf-GAP domain and FG repeat-containing protein 1 (AGFG1), found in Homo sapiens (Human).